The sequence spans 424 residues: Enolase (424 aa).

Q163 lines the (2R)-2-phosphoglycerate pocket. E204 functions as the Proton donor in the catalytic mechanism. Residues D241, E284, and D311 each coordinate Mg(2+). (2R)-2-phosphoglycerate-binding residues include K336, R365, S366, and K387. Residue K336 is the Proton acceptor of the active site.

Belongs to the enolase family. It depends on Mg(2+) as a cofactor.

The protein resides in the cytoplasm. It is found in the secreted. It localises to the cell surface. It carries out the reaction (2R)-2-phosphoglycerate = phosphoenolpyruvate + H2O. It functions in the pathway carbohydrate degradation; glycolysis; pyruvate from D-glyceraldehyde 3-phosphate: step 4/5. Its function is as follows. Catalyzes the reversible conversion of 2-phosphoglycerate (2-PG) into phosphoenolpyruvate (PEP). It is essential for the degradation of carbohydrates via glycolysis. The protein is Enolase of Dictyoglomus turgidum (strain DSM 6724 / Z-1310).